The primary structure comprises 450 residues: tRNA modification GTPase MnmE (450 aa).

3 residues coordinate (6S)-5-formyl-5,6,7,8-tetrahydrofolate: R23, E79, and K118. The 161-residue stretch at 214-374 folds into the TrmE-type G domain; it reads GITLILVGKP…LKEHILNKVG (161 aa). N224 is a binding site for K(+). GTP contacts are provided by residues 224–229, 243–249, and 268–271; these read NAGKSS, TSIAGTT, and DTAG. A Mg(2+)-binding site is contributed by S228. Residues T243, I245, and T248 each coordinate K(+). Mg(2+) is bound at residue T249. K450 is a (6S)-5-formyl-5,6,7,8-tetrahydrofolate binding site.

It belongs to the TRAFAC class TrmE-Era-EngA-EngB-Septin-like GTPase superfamily. TrmE GTPase family. As to quaternary structure, homodimer. Heterotetramer of two MnmE and two MnmG subunits. K(+) serves as cofactor.

Its subcellular location is the cytoplasm. Exhibits a very high intrinsic GTPase hydrolysis rate. Involved in the addition of a carboxymethylaminomethyl (cmnm) group at the wobble position (U34) of certain tRNAs, forming tRNA-cmnm(5)s(2)U34. This is tRNA modification GTPase MnmE from Francisella tularensis subsp. novicida (strain U112).